A 374-amino-acid chain; its full sequence is Putative glutamate--cysteine ligase 2 (374 aa).

The protein belongs to the glutamate--cysteine ligase type 2 family. YbdK subfamily.

It carries out the reaction L-cysteine + L-glutamate + ATP = gamma-L-glutamyl-L-cysteine + ADP + phosphate + H(+). In terms of biological role, ATP-dependent carboxylate-amine ligase which exhibits weak glutamate--cysteine ligase activity. This chain is Putative glutamate--cysteine ligase 2, found in Verminephrobacter eiseniae (strain EF01-2).